The primary structure comprises 275 residues: LexA repressor (275 aa).

The interval 1-50 (MKRSTPRPARSQAALTTSSEESPDRVERGGDGVATVTDFPDGPPDETGLT) is disordered. Residues 73-93 (MREIGEAVGLTSTSSVAHQLM) constitute a DNA-binding region (H-T-H motif). Residues 114–151 (RSAESAVPDASAGHSPAADRAPSARRPPRGPSPIDSNP) are disordered. Residues Ser-199 and Lys-236 each act as for autocatalytic cleavage activity in the active site.

This sequence belongs to the peptidase S24 family. As to quaternary structure, homodimer.

The enzyme catalyses Hydrolysis of Ala-|-Gly bond in repressor LexA.. Its function is as follows. Represses a number of genes involved in the response to DNA damage (SOS response), including recA and lexA. In the presence of single-stranded DNA, RecA interacts with LexA causing an autocatalytic cleavage which disrupts the DNA-binding part of LexA, leading to derepression of the SOS regulon and eventually DNA repair. The protein is LexA repressor of Acidothermus cellulolyticus (strain ATCC 43068 / DSM 8971 / 11B).